Reading from the N-terminus, the 1072-residue chain is Dyslexia-associated protein KIAA0319 (1072 aa).

A signal peptide spans 1-20 (MAPPTGVLSSLLLLVTIAGC). An MANSC domain is found at 21-99 (ARKQCSEGRT…PKKMGPIRSY (79 aa)). The Extracellular portion of the chain corresponds to 21-955 (ARKQCSEGRT…WDGESNCEWS (935 aa)). Disordered regions lie at residues 168–277 (LQPS…SLPP) and 295–327 (VTPGSTEHSIPTPPTSAAPSESTPSELPISPTT). N-linked (GlcNAc...) asparagine glycans are attached at residues asparagine 196, asparagine 219, and asparagine 262. The span at 254–265 (SQLQEQSSNSSG) shows a compositional bias: polar residues. A compositionally biased stretch (low complexity) spans 311–320 (AAPSESTPSE). 5 PKD domains span residues 341 to 427 (DNLI…VKPA), 435 to 524 (VAVV…VNNA), 530 to 620 (VANA…VQPE), 621 to 714 (NNRP…VKKE), and 720 to 811 (RARA…VQPD). N-linked (GlcNAc...) asparagine glycosylation is found at asparagine 394, asparagine 421, asparagine 498, asparagine 513, asparagine 536, and asparagine 551. A glycan (N-linked (GlcNAc...) asparagine) is linked at asparagine 733. The helical transmembrane segment at 956–976 (IFYVTVLAFTLIVLTGGFTWL) threads the bilayer. The Cytoplasmic portion of the chain corresponds to 977–1072 (CICCCKRQKR…ASFSYCSKDR (96 aa)). The Endocytosis signal motif lies at 995 to 998 (YTIL). Residues 1045–1072 (KMERGNPKVSMNGSIRNGASFSYCSKDR) form a disordered region. The span at 1053-1072 (VSMNGSIRNGASFSYCSKDR) shows a compositional bias: polar residues.

As to quaternary structure, homodimer. Interacts with AP2M1; required for clathrin-mediated endocytosis. N-glycosylated. In terms of processing, O-glycosylated. Post-translationally, shedding of the extracellular domain and intramembrane cleavage produce several proteolytic products. The intramembrane cleavage releases a soluble cytoplasmic polypeptide that translocates to the nucleolus. As to expression, detected in adult brain cortex and fetal frontal lobe (at protein level). Highly expressed in brain cortex, putamen, amygdala, hippocampus and cerebellum.

The protein localises to the cell membrane. It localises to the early endosome membrane. Involved in neuronal migration during development of the cerebral neocortex. May function in a cell autonomous and a non-cell autonomous manner and play a role in appropriate adhesion between migrating neurons and radial glial fibers. May also regulate growth and differentiation of dendrites. This is Dyslexia-associated protein KIAA0319 (KIAA0319) from Homo sapiens (Human).